Consider the following 375-residue polypeptide: Porin Omp2b (375 aa).

The first 22 residues, 1–22 (MNIKSLLLGSAAALVAASGAQA), serve as a signal peptide directing secretion.

The protein belongs to the alphaproteobacteria porin family. Homotrimer.

Its subcellular location is the cell outer membrane. Functionally, forms passive diffusion pores that allow small molecular weight hydrophilic materials across the outer membrane. In Brucella suis, this protein is Porin Omp2b (omp2b).